We begin with the raw amino-acid sequence, 169 residues long: uncharacterized protein (169 aa).

This is an uncharacterized protein from Autographa californica nuclear polyhedrosis virus (AcMNPV).